The chain runs to 1026 residues: RecBCD enzyme subunit RecB (1026 aa).

A UvrD-like helicase ATP-binding domain is found at 1–438; the sequence is MSSFDIFSPT…LILDTNYRST (438 aa). The interval 1 to 766 is DNA-binding and helicase activity, interacts with RecC; it reads MSSFDIFSPT…LANYANITQH (766 aa). 21–28 lines the ATP pocket; the sequence is ASAGTGKT. A UvrD-like helicase C-terminal domain is found at 452–700; the sequence is PSPFLETPQT…KITTVHSSKG (249 aa). The segment at 815–1026 is nuclease activity, interacts with RecD and RecA; sequence SQPIYSFSST…KGNGFLQPSP (212 aa). 3 residues coordinate Mg(2+): His-854, Asp-940, and Asp-953. Asp-953 (for nuclease activity) is an active-site residue.

Belongs to the helicase family. UvrD subfamily. As to quaternary structure, heterotrimer of RecB, RecC and RecD. All subunits contribute to DNA-binding. Interacts with RecA. Requires Mg(2+) as cofactor.

The enzyme catalyses Exonucleolytic cleavage (in the presence of ATP) in either 5'- to 3'- or 3'- to 5'-direction to yield 5'-phosphooligonucleotides.. The catalysed reaction is Couples ATP hydrolysis with the unwinding of duplex DNA by translocating in the 3'-5' direction.. It catalyses the reaction ATP + H2O = ADP + phosphate + H(+). Functionally, a helicase/nuclease that prepares dsDNA breaks (DSB) for recombinational DNA repair. Binds to DSBs and unwinds DNA via a highly rapid and processive ATP-dependent bidirectional helicase activity. Unwinds dsDNA until it encounters a Chi (crossover hotspot instigator) sequence from the 3' direction. Cuts ssDNA a few nucleotides 3' to the Chi site. The properties and activities of the enzyme are changed at Chi. The Chi-altered holoenzyme produces a long 3'-ssDNA overhang and facilitates RecA-binding to the ssDNA for homologous DNA recombination and repair. Holoenzyme degrades any linearized DNA that is unable to undergo homologous recombination. In the holoenzyme this subunit contributes ATPase, 3'-5' helicase, exonuclease activity and loads RecA onto ssDNA. The chain is RecBCD enzyme subunit RecB from Chlamydia muridarum (strain MoPn / Nigg).